The sequence spans 303 residues: MKKKILFWVLGILGVLIIGGGIYAYNVYSSVSNTLKEVHQPLKRDQNNSNVGEKVSKSEPVSILLLGADERGEDKGRSDSLMVITLNPKNNSMKTVSIPRDTYTEIVGKGKSDKINHAYAFGGVDMSVATVENFLNVPINYYIEVNMEGFKDIVDAVGGVDVKNDLEFTQDGHHFAKGNIHLTGDQALAFTRMRKQDPRGDFGRQMRQRQVMQGVIKKGASFSSLTGYGDVLSAIQKNVKTNLTQDQMFDMQKNYKDCLKNSEDIQIPGDGHKAADGIWYYYVPDAAKQDLTNKLRTHLEVTK.

Residues 1–4 (MKKK) are Cytoplasmic-facing. Residues 5 to 25 (ILFWVLGILGVLIIGGGIYAY) traverse the membrane as a helical; Signal-anchor for type II membrane protein segment. Residues 26 to 303 (NVYSSVSNTL…KLRTHLEVTK (278 aa)) lie on the Extracellular side of the membrane.

This sequence belongs to the LytR/CpsA/Psr (LCP) family.

It localises to the cell membrane. The protein operates within cell wall biogenesis. May catalyze the final step in cell wall teichoic acid biosynthesis, the transfer of the anionic cell wall polymers (APs) from their lipid-linked precursor to the cell wall peptidoglycan (PG). The polypeptide is Polyisoprenyl-teichoic acid--peptidoglycan teichoic acid transferase TagU (Bacillus anthracis (strain A0248)).